We begin with the raw amino-acid sequence, 102 residues long: Large ribosomal subunit protein uL24 (102 aa).

It belongs to the universal ribosomal protein uL24 family. In terms of assembly, part of the 50S ribosomal subunit.

Functionally, one of two assembly initiator proteins, it binds directly to the 5'-end of the 23S rRNA, where it nucleates assembly of the 50S subunit. One of the proteins that surrounds the polypeptide exit tunnel on the outside of the subunit. The polypeptide is Large ribosomal subunit protein uL24 (Rhizobium etli (strain CIAT 652)).